Consider the following 644-residue polypeptide: Fidgetin-like protein 2 (644 aa).

Disordered regions lie at residues 1–36 and 285–323; these read MHWT…ELPP and AADG…GGGG. Residues 10 to 27 are compositionally biased toward polar residues; that stretch reads PLNQWPEQHLDVSSTTPS. Low complexity predominate over residues 285 to 294; that stretch reads AADGASYPAA. Residues alanine 390 and 430-435 each bind ATP; that span reads GCGKAL.

Belongs to the AAA ATPase family. Mg(2+) is required as a cofactor.

It localises to the cytoplasm. The protein localises to the cell cortex. The catalysed reaction is ATP + H2O = ADP + phosphate + H(+). Microtubule-severing enzyme that negatively regulates cell migration and wound healing. In migrating cells, targets dynamic microtubules (MTs) at the leading edge and severs them, thereby suppressing motility. Microtubule severing releases ARHGEF2 which activates RHOA, which in turn regulates focal ahesion turnover via focal adhesion kinase, as opposed to F-actin polymerization, to suppress cell motility. Negative regulator of axon regeneration that suppresses axonal growth by selectively severing dynamic MTs in the distal axon shaft and growth cone. Contributes to proper cell branching during endothelial and neuronal development. The polypeptide is Fidgetin-like protein 2 (Fignl2) (Mus musculus (Mouse)).